A 341-amino-acid chain; its full sequence is Hypophosphite import ATP-binding protein HtxD (341 aa).

The region spanning 6–249 is the ABC transporter domain; the sequence is LQLKNVGKSY…RVHALYQVPA (244 aa). Residue 38–45 participates in ATP binding; it reads GTSGAGKS. The tract at residues 278–341 is disordered; it reads IHTPHTRAAP…TGRGQDRGPG (64 aa). 2 stretches are compositionally biased toward basic and acidic residues: residues 307–320 and 327–341; these read ADRR…DRTT and GGHD…RGPG.

The protein belongs to the ABC transporter superfamily. Phosphonates importer (TC 3.A.1.9.1) family. The complex is composed of two ATP-binding proteins (HtxD), two transmembrane proteins (HtxC and HtxE) and a solute-binding protein (HtxB).

It is found in the cell inner membrane. The catalysed reaction is phosphinate(out) + ATP + H2O = phosphinate(in) + ADP + phosphate + H(+). Functionally, part of the ABC transporter complex HtxBCDE involved in hypophosphite import. Responsible for energy coupling to the transport system. The protein is Hypophosphite import ATP-binding protein HtxD (htxD) of Stutzerimonas stutzeri (Pseudomonas stutzeri).